Here is a 177-residue protein sequence, read N- to C-terminus: ATP synthase subunit delta (177 aa).

It belongs to the ATPase delta chain family. In terms of assembly, F-type ATPases have 2 components, F(1) - the catalytic core - and F(0) - the membrane proton channel. F(1) has five subunits: alpha(3), beta(3), gamma(1), delta(1), epsilon(1). F(0) has three main subunits: a(1), b(2) and c(10-14). The alpha and beta chains form an alternating ring which encloses part of the gamma chain. F(1) is attached to F(0) by a central stalk formed by the gamma and epsilon chains, while a peripheral stalk is formed by the delta and b chains.

It is found in the cell membrane. Functionally, f(1)F(0) ATP synthase produces ATP from ADP in the presence of a proton or sodium gradient. F-type ATPases consist of two structural domains, F(1) containing the extramembraneous catalytic core and F(0) containing the membrane proton channel, linked together by a central stalk and a peripheral stalk. During catalysis, ATP synthesis in the catalytic domain of F(1) is coupled via a rotary mechanism of the central stalk subunits to proton translocation. In terms of biological role, this protein is part of the stalk that links CF(0) to CF(1). It either transmits conformational changes from CF(0) to CF(1) or is implicated in proton conduction. The protein is ATP synthase subunit delta of Carboxydothermus hydrogenoformans (strain ATCC BAA-161 / DSM 6008 / Z-2901).